The following is a 307-amino-acid chain: Fructokinase (307 aa).

This sequence belongs to the carbohydrate kinase PfkB family.

The enzyme catalyses D-fructose + ATP = D-fructose 6-phosphate + ADP + H(+). The polypeptide is Fructokinase (scrK) (Vibrio alginolyticus).